The sequence spans 265 residues: Flagellar brake protein YcgR (265 aa).

The 118-residue stretch at 135–252 (QRRESYRLET…DETIQRYIFR (118 aa)) folds into the PilZ domain.

Belongs to the YcgR family. As to quaternary structure, monomer. Interacts with the flagellar basal bodies.

It localises to the bacterial flagellum basal body. Functionally, acts as a flagellar brake, regulating swimming and swarming in a bis-(3'-5') cyclic diguanylic acid (c-di-GMP)-dependent manner. Binds 1 c-di-GMP dimer per subunit. Increasing levels of c-di-GMP lead to decreased motility. In Xanthomonas campestris pv. campestris (strain B100), this protein is Flagellar brake protein YcgR.